Reading from the N-terminus, the 448-residue chain is Exodeoxyribonuclease 7 large subunit (448 aa).

This sequence belongs to the XseA family. As to quaternary structure, heterooligomer composed of large and small subunits.

Its subcellular location is the cytoplasm. It catalyses the reaction Exonucleolytic cleavage in either 5'- to 3'- or 3'- to 5'-direction to yield nucleoside 5'-phosphates.. Functionally, bidirectionally degrades single-stranded DNA into large acid-insoluble oligonucleotides, which are then degraded further into small acid-soluble oligonucleotides. The polypeptide is Exodeoxyribonuclease 7 large subunit (Shewanella sp. (strain MR-7)).